Consider the following 59-residue polypeptide: Pycsar effector protein MePycTM (59 aa).

A helical membrane pass occupies residues 36-56 (VAVAIYLLGAAMLSSGAAVLA).

Its subcellular location is the cell membrane. Functionally, pycsar (pyrimidine cyclase system for antiphage resistance) provides immunity against bacteriophage. The pyrimidine cyclase (PycC) synthesizes cyclic nucleotides in response to infection; these serve as specific second messenger signals. The signals activate the adjacent effector, leading to bacterial cell death and abortive phage infection. A clade D Pycsar system. The effector gene of a two-gene Pycsar system. Expression of this and adjacent uridylate cyclase MePycC (AC A0A1C5G2V9) probably confers resistance to bacteriophage. The genes are probably only expressed in response to bacteriophage infection. Probably only responds to cUMP (produced by its cognate NTP cyclase), acts by impairing membrane integrity. This is Pycsar effector protein MePycTM from Micromonospora echinofusca.